A 379-amino-acid chain; its full sequence is Armadillo repeat-containing X-linked protein 3 (379 aa).

Residues 1–6 are Mitochondrial intermembrane-facing; that stretch reads MGYARK. Mitochondrion outer membrane (MOM)-targeting sequence regions lie at residues 1–6 and 26–37; these read MGYARK and RLTRGRKQNKEK. A helical; Signal-anchor membrane pass occupies residues 7 to 29; it reads VGWVTAGLVIGAGACYCIYRLTR. Over 30-379 the chain is Cytoplasmic; it reads GRKQNKEKMA…TERMFPKSQE (350 aa). Residues 34–69 are disordered; the sequence is NKEKMAEGGPGDVEDAGDCSGARYNDWSDDDDDSNE. Phosphoserine occurs at positions 61, 67, and 72. A nuclear localization signal region spans residues 89–98; it reads RARARARARA. S110 is modified (phosphoserine). ARM repeat units lie at residues 111–151, 153–192, and 233–272; these read PNSD…NNAA, AFNRDIIRDLGGLPIVAKILNTRDPIVKEKALIVLNNLSV, and VTNEYQHILANSISDFFRLFSAGNEETKLQVLKLLLNLAE.

It belongs to the eutherian X-chromosome-specific Armcx family. As to quaternary structure, interacts (via ARM domain) with MIRO1, MIRO2 and TRAK2. The interaction with Miro is calcium-dependent. Interacts with Sox10.

The protein resides in the mitochondrion outer membrane. It localises to the cytoplasm. Its subcellular location is the nucleus. Functionally, regulates mitochondrial aggregation and transport in axons in living neurons. May link mitochondria to the Trak2-kinesin motor complex via its interaction with Miro and Trak2. Mitochondrial distribution and dynamics is regulated through Armcx3 protein degradation, which is promoted by PCK and negatively regulated by Wnt1. Enhances the Sox10-mediated transactivation of the neuronal acetylcholine receptor subunit alpha-3 and beta-4 subunit gene promoters. The polypeptide is Armadillo repeat-containing X-linked protein 3 (Armcx3) (Rattus norvegicus (Rat)).